The chain runs to 126 residues: Large ribosomal subunit protein bL12 (126 aa).

Residues 107–116 (EDAEKAKSQL) show a composition bias toward basic and acidic residues. Residues 107 to 126 (EDAEKAKSQLEEAGATVELK) form a disordered region.

This sequence belongs to the bacterial ribosomal protein bL12 family. As to quaternary structure, homodimer. Part of the ribosomal stalk of the 50S ribosomal subunit. Forms a multimeric L10(L12)X complex, where L10 forms an elongated spine to which 2 to 4 L12 dimers bind in a sequential fashion. Binds GTP-bound translation factors.

Its function is as follows. Forms part of the ribosomal stalk which helps the ribosome interact with GTP-bound translation factors. Is thus essential for accurate translation. The chain is Large ribosomal subunit protein bL12 from Bifidobacterium adolescentis (strain ATCC 15703 / DSM 20083 / NCTC 11814 / E194a).